A 505-amino-acid polypeptide reads, in one-letter code: One cut domain family member 2 (505 aa).

Disordered stretches follow at residues 29-94 (LGTL…GTAA), 165-190 (KFHH…RLSG), and 275-333 (EQHL…QLEE). Residues 35-56 (PVGGGSGGGGGGGGGGGGGGPG) are compositionally biased toward gly residues. A compositionally biased stretch (basic residues) spans 167–187 (HHPHPHHHPHHHHHHHHHHQR). The segment at residues 325–411 (VATSGQLEEI…QRMSALRLAA (87 aa)) is a DNA-binding region (CUT). The homeobox DNA-binding region spans 427–486 (QKKSRLVFTDLQRRTLFAIFKENKRPSKEMQITISQQLGLELTTVSNFFMNARRRSLEKW).

The protein belongs to the CUT homeobox family.

It is found in the nucleus. Transcriptional activator. Activates the transcription of a number of liver genes such as HNF3B. This is One cut domain family member 2 (Onecut2) from Mus musculus (Mouse).